The following is a 307-amino-acid chain: N-acetylneuraminate lyase (307 aa).

Aceneuramate is bound by residues Thr-51 and Thr-52. The Proton donor role is filled by Tyr-143. Catalysis depends on Lys-173, which acts as the Schiff-base intermediate with substrate. The aceneuramate site is built by Ser-175, Gly-199, Asp-201, Glu-202, and Ser-218.

Belongs to the DapA family. NanA subfamily. Homotetramer.

The protein resides in the cytoplasm. It catalyses the reaction aceneuramate = aldehydo-N-acetyl-D-mannosamine + pyruvate. The protein operates within amino-sugar metabolism; N-acetylneuraminate degradation. Catalyzes the cleavage of N-acetylneuraminic acid (sialic acid) to form pyruvate and N-acetylmannosamine via a Schiff base intermediate. It prevents sialic acids from being recycled and returning to the cell surface. Involved in the N-glycolylneuraminic acid (Neu5Gc) degradation pathway. In Danio rerio (Zebrafish), this protein is N-acetylneuraminate lyase.